The primary structure comprises 229 residues: Heptaprenylglyceryl phosphate synthase (229 aa).

Lys12 lines the sn-glycerol 1-phosphate pocket. Residues Asp14 and Ser40 each contribute to the Mg(2+) site. Sn-glycerol 1-phosphate is bound by residues 159–164 (YLEYSG), Gly189, and 209–210 (GN).

It belongs to the GGGP/HepGP synthase family. Group I subfamily. As to quaternary structure, homodimer. The cofactor is Mg(2+).

It carries out the reaction sn-glycerol 1-phosphate + all-trans-heptaprenyl diphosphate = 3-heptaprenyl-sn-glycero-1-phosphate + diphosphate. The protein operates within membrane lipid metabolism; glycerophospholipid metabolism. Functionally, prenyltransferase that catalyzes in vivo the transfer of the heptaprenyl moiety of heptaprenyl pyrophosphate (HepPP; 35 carbon atoms) to the C3 hydroxyl of sn-glycerol-1-phosphate (G1P), producing heptaprenylglyceryl phosphate (HepGP). This reaction is an ether-bond-formation step in the biosynthesis of archaea-type G1P-based membrane lipids found in Bacillales. In Bacillus cereus (strain G9842), this protein is Heptaprenylglyceryl phosphate synthase.